The sequence spans 378 residues: Apoptosis-inducing factor 1 (378 aa).

A helical transmembrane segment spans residues 7-25 (NIVVVGAGVFGVSVANHLY). Residues 12 to 16 (GAGVF), R51, K56, and D283 each bind FAD.

Belongs to the FAD-dependent oxidoreductase family. Requires FAD as cofactor.

The protein resides in the mitochondrion outer membrane. Its subcellular location is the nucleus. Its function is as follows. Putative FAD-dependent oxidoreductase involved in the resistance to cercosporin and other singlet oxygen-generating photosensitizers. Translocates from mitochondria to the nucleus under apoptotic conditions, where it degrades DNA and induces apoptosis. In Saccharomyces cerevisiae (strain ATCC 204508 / S288c) (Baker's yeast), this protein is Apoptosis-inducing factor 1 (AIF1).